We begin with the raw amino-acid sequence, 598 residues long: DNA (cytosine-5)-methyltransferase DRM2 (598 aa).

Disordered stretches follow at residues Met1–Ala49 and Glu114–Asp146. The region spanning Pro42–Tyr91 is the UBA 1 domain. The span at Glu114–Asp128 shows a compositional bias: acidic residues. The region spanning Glu150–Ser194 is the UBA 2 domain. A disordered region spans residues Gly227–Pro252. The 327-residue stretch at Val272–Val598 folds into the SAM-dependent MTase DRM-type domain.

Belongs to the class I-like SAM-binding methyltransferase superfamily. DRM-methyltransferase family. As to quaternary structure, interacts (via UBA domains) with EIF4A.

Its subcellular location is the nucleus. The catalysed reaction is a 2'-deoxycytidine in DNA + S-adenosyl-L-methionine = a 5-methyl-2'-deoxycytidine in DNA + S-adenosyl-L-homocysteine + H(+). In terms of biological role, involved in de novo DNA methylation. Required for CpG and non-CpG methylation. Required for normal establishment and maintenance of RNA-directed DNA methylation (RdDM) mediated by small interfering RNAs (siRNAs). Regulates proper plant development in both vegetative and reproductive stages through DNA methylation. This Oryza sativa subsp. japonica (Rice) protein is DNA (cytosine-5)-methyltransferase DRM2.